The sequence spans 262 residues: Transcription factor of morphogenesis MCM1 (262 aa).

Disordered regions lie at residues 1–62 (MAIK…ERRK) and 140–262 (EEGL…QQYQ). The segment covering 17-35 (NSHSTNNNNNSNNSNSNNN) has biased composition (low complexity). In terms of domain architecture, MADS-box spans 58–118 (KERRKIEIKF…GLVYTFTTPK (61 aa)). Residues 150–170 (QSDGNTGDSPDQSPAPATNPN) are compositionally biased toward polar residues. Low complexity-rich tracts occupy residues 182 to 198 (QQQQ…AQQQ), 224 to 239 (PQQQ…LQGG), and 249 to 262 (NIQN…QQYQ).

In terms of assembly, interacts with AHR1.

It localises to the nucleus. Functionally, transcription factor that is recruited by AHR1 to the promoters of genes involved in biofilm formation, which include several key adhesion genes. Plays an important role in cell adhesion, hyphal growth and virulence. Implicated in the regulation of opaque-phase-specific gene expression. The polypeptide is Transcription factor of morphogenesis MCM1 (MCM1) (Candida albicans (strain SC5314 / ATCC MYA-2876) (Yeast)).